The following is a 241-amino-acid chain: NH(3)-dependent NAD(+) synthetase (241 aa).

29 to 36 provides a ligand contact to ATP; the sequence is GISGGIDS. Residue D35 participates in Mg(2+) binding. R110 is a binding site for deamido-NAD(+). Residue E135 participates in Mg(2+) binding. 2 residues coordinate deamido-NAD(+): K143 and D150. ATP-binding residues include K159 and S181. 226–227 provides a ligand contact to deamido-NAD(+); that stretch reads HK.

It belongs to the NAD synthetase family. Homodimer.

The enzyme catalyses deamido-NAD(+) + NH4(+) + ATP = AMP + diphosphate + NAD(+) + H(+). It participates in cofactor biosynthesis; NAD(+) biosynthesis; NAD(+) from deamido-NAD(+) (ammonia route): step 1/1. In terms of biological role, catalyzes the ATP-dependent amidation of deamido-NAD to form NAD. Uses ammonia as a nitrogen source. This is NH(3)-dependent NAD(+) synthetase from Finegoldia magna (strain ATCC 29328 / DSM 20472 / WAL 2508) (Peptostreptococcus magnus).